The sequence spans 443 residues: D-serine dehydratase (443 aa).

Position 118 is an N6-(pyridoxal phosphate)lysine (Lys-118).

It belongs to the serine/threonine dehydratase family. DsdA subfamily. Monomer. The cofactor is pyridoxal 5'-phosphate.

The enzyme catalyses D-serine = pyruvate + NH4(+). In Yersinia enterocolitica serotype O:8 / biotype 1B (strain NCTC 13174 / 8081), this protein is D-serine dehydratase.